Consider the following 397-residue polypeptide: Succinyl-diaminopimelate desuccinylase (397 aa).

Zn(2+) is bound at residue His73. Residue Asp75 is part of the active site. Asp106 is a binding site for Zn(2+). Glu140 serves as the catalytic Proton acceptor. Residues Glu141, Glu169, and His366 each coordinate Zn(2+).

The protein belongs to the peptidase M20A family. DapE subfamily. In terms of assembly, homodimer. Requires Zn(2+) as cofactor. The cofactor is Co(2+).

The enzyme catalyses N-succinyl-(2S,6S)-2,6-diaminopimelate + H2O = (2S,6S)-2,6-diaminopimelate + succinate. Its pathway is amino-acid biosynthesis; L-lysine biosynthesis via DAP pathway; LL-2,6-diaminopimelate from (S)-tetrahydrodipicolinate (succinylase route): step 3/3. Functionally, catalyzes the hydrolysis of N-succinyl-L,L-diaminopimelic acid (SDAP), forming succinate and LL-2,6-diaminopimelate (DAP), an intermediate involved in the bacterial biosynthesis of lysine and meso-diaminopimelic acid, an essential component of bacterial cell walls. The chain is Succinyl-diaminopimelate desuccinylase from Rhizobium rhizogenes (strain K84 / ATCC BAA-868) (Agrobacterium radiobacter).